Here is a 255-residue protein sequence, read N- to C-terminus: Ribosomal RNA small subunit methyltransferase A (255 aa).

Positions 12, 14, 39, 60, 84, and 106 each coordinate S-adenosyl-L-methionine.

This sequence belongs to the class I-like SAM-binding methyltransferase superfamily. rRNA adenine N(6)-methyltransferase family. RsmA subfamily.

It is found in the cytoplasm. It catalyses the reaction adenosine(1518)/adenosine(1519) in 16S rRNA + 4 S-adenosyl-L-methionine = N(6)-dimethyladenosine(1518)/N(6)-dimethyladenosine(1519) in 16S rRNA + 4 S-adenosyl-L-homocysteine + 4 H(+). Specifically dimethylates two adjacent adenosines (A1518 and A1519) in the loop of a conserved hairpin near the 3'-end of 16S rRNA in the 30S particle. May play a critical role in biogenesis of 30S subunits. This chain is Ribosomal RNA small subunit methyltransferase A, found in Janthinobacterium sp. (strain Marseille) (Minibacterium massiliensis).